Here is a 475-residue protein sequence, read N- to C-terminus: 3-hydroxyadipyl-CoA dehydrogenase (475 aa).

This sequence belongs to the 3-hydroxyacyl-CoA dehydrogenase family. As to quaternary structure, homotrimer.

It catalyses the reaction (3S)-3-hydroxyadipyl-CoA + NAD(+) = 3-oxoadipyl-CoA + NADH + H(+). It participates in aromatic compound metabolism; phenylacetate degradation. In terms of biological role, catalyzes the oxidation of 3-hydroxyadipyl-CoA to yield 3-oxoadipyl-CoA. The polypeptide is 3-hydroxyadipyl-CoA dehydrogenase (paaH) (Escherichia coli (strain K12)).